An 891-amino-acid chain; its full sequence is DNA mismatch repair protein MutS (891 aa).

ATP is bound at residue Gly634–Ser641.

It belongs to the DNA mismatch repair MutS family.

Functionally, this protein is involved in the repair of mismatches in DNA. It is possible that it carries out the mismatch recognition step. This protein has a weak ATPase activity. The polypeptide is DNA mismatch repair protein MutS (Burkholderia pseudomallei (strain 1106a)).